The following is a 483-amino-acid chain: Probable cytochrome P450 517A4 (483 aa).

A helical membrane pass occupies residues 1–21; it reads MEIVNVLLFLIILFLVKDFVK. Residue Cys429 coordinates heme.

This sequence belongs to the cytochrome P450 family. The cofactor is heme.

The protein resides in the membrane. The chain is Probable cytochrome P450 517A4 (cyp517A4) from Dictyostelium discoideum (Social amoeba).